The primary structure comprises 403 residues: F-box/kelch-repeat protein At5g39560 (403 aa).

In terms of domain architecture, F-box spans 26 to 72 (PPSLMSLPYEIIENILARISKWSYPNLSLVSKSFLSLLSSPQLYKTR). 4 Kelch repeats span residues 138–182 (EIYV…LIDQ), 184–229 (IYVL…VWPN), 248–294 (NPNA…IENV), and 296–340 (YACH…VNYG).

In Arabidopsis thaliana (Mouse-ear cress), this protein is F-box/kelch-repeat protein At5g39560.